Consider the following 857-residue polypeptide: Blue light receptor lreA (857 aa).

3 PAS domains span residues 306 to 328, 479 to 542, and 608 to 642; these read IIYVSEAFERLTGYTEQEIVGQN, LVEN…TTTD, and LSKSGIVLFMTSKARPVLGRMPDELIGKSLQDLMD. The segment at 811 to 836 adopts a GATA-type zinc-finger fold; the sequence is CAICQTKKTPEWRRGPSGERDLCNSC.

Functionally, transcription factor that acts as a blue light sensor. Plays crucial roles in fungal growth and asexual development. Involved in conidiophore formation, sclerotium production, and conidial stress tolerance. Promotes conidiation by inducing the expression of brlA and abaA. Positively regulates the fungal pathogenicity towards maize. In blue light conditions, inhibits aflatoxin B1 (AFB1) biosynthesis by down-regulating the expression of key genes such as aflA, aflJ, aflH, aflO and aflK. The polypeptide is Blue light receptor lreA (Aspergillus flavus).